A 358-amino-acid chain; its full sequence is Protein SRG1 (358 aa).

The region spanning 209-309 is the Fe2OG dioxygenase domain; that stretch reads SVQSMRMNYY…RLSIATFHNV (101 aa). Residues histidine 233, aspartate 235, and histidine 290 each contribute to the Fe cation site.

The protein belongs to the iron/ascorbate-dependent oxidoreductase family. As to expression, low expression in roots and leaves.

This is Protein SRG1 (SRG1) from Arabidopsis thaliana (Mouse-ear cress).